We begin with the raw amino-acid sequence, 115 residues long: NADH-ubiquinone oxidoreductase chain 3 (115 aa).

The next 3 helical transmembrane spans lie at 4–24, 55–75, and 84–104; these read LMVL…AFWL, FFLV…LLPL, and INIM…GLAY.

This sequence belongs to the complex I subunit 3 family. In terms of assembly, core subunit of respiratory chain NADH dehydrogenase (Complex I) which is composed of 45 different subunits. Interacts with TMEM186. Interacts with TMEM242.

The protein resides in the mitochondrion membrane. The enzyme catalyses a ubiquinone + NADH + 5 H(+)(in) = a ubiquinol + NAD(+) + 4 H(+)(out). In terms of biological role, core subunit of the mitochondrial membrane respiratory chain NADH dehydrogenase (Complex I) that is believed to belong to the minimal assembly required for catalysis. Complex I functions in the transfer of electrons from NADH to the respiratory chain. The immediate electron acceptor for the enzyme is believed to be ubiquinone. This Onychomys leucogaster (Northern grasshopper mouse) protein is NADH-ubiquinone oxidoreductase chain 3.